Consider the following 235-residue polypeptide: Clathrin light chain A (235 aa).

Positions 1–32 (MAELDPFGAPAGAPGGPALGNGVAGAGEEDPA) are disordered. The span at 13-25 (APGGPALGNGVAG) shows a compositional bias: gly residues. The segment at 99–161 (VDRLQSEPES…QLQKTKANNR (63 aa)) is involved in binding clathrin heavy chain. Residues serine 104 and serine 193 each carry the phosphoserine modification. Position 210 is an N6-acetyllysine (lysine 210). Serine 223 bears the Phosphoserine mark. Lysine 229 bears the N6-acetyllysine mark.

This sequence belongs to the clathrin light chain family. As to quaternary structure, clathrin coats are formed from molecules containing 3 heavy chains and 3 light chains. Interacts with CALY; the interaction stimulates clathrin self-assembly and clathrin-mediated endocytosis. Interacts with CKAP5 and TACC3 forming the TACC3/ch-TOG/clathrin complex located at spindle inter-microtubules bridges; the complex implicates clathrin triskelions.

It is found in the cytoplasmic vesicle membrane. The protein resides in the membrane. The protein localises to the coated pit. It localises to the cytoplasm. Its subcellular location is the cytoskeleton. It is found in the spindle. Clathrin is the major protein of the polyhedral coat of coated pits and vesicles. Acts as a component of the TACC3/ch-TOG/clathrin complex proposed to contribute to stabilization of kinetochore fibers of the mitotic spindle by acting as inter-microtubule bridge. The protein is Clathrin light chain A (Clta) of Mus musculus (Mouse).